The chain runs to 181 residues: Transcriptional repressor NrdR (181 aa).

A zinc finger lies at 3-34; that stretch reads CLFCQHTDTRVIDSRVSEDGATIRRRRECEAC. The 91-residue stretch at 49–139 folds into the ATP-cone domain; sequence PVIIKKDGGR…VYRSFQDVAD (91 aa).

This sequence belongs to the NrdR family. Zn(2+) is required as a cofactor.

Functionally, negatively regulates transcription of bacterial ribonucleotide reductase nrd genes and operons by binding to NrdR-boxes. This is Transcriptional repressor NrdR from Xylella fastidiosa (strain M12).